Here is an 89-residue protein sequence, read N- to C-terminus: MSLDTTEKQQLINTHQTHGTDTGSAEVQVAMLSERINRLSRHLQNNIHDFSSRQGLLKMIGRRKRLLSYMRSKSEQRYADTIAKLGIRG.

Residues 1–25 (MSLDTTEKQQLINTHQTHGTDTGSA) form a disordered region. Residues 8–25 (KQQLINTHQTHGTDTGSA) are compositionally biased toward polar residues.

The protein belongs to the universal ribosomal protein uS15 family. In terms of assembly, part of the 30S ribosomal subunit. Forms a bridge to the 50S subunit in the 70S ribosome, contacting the 23S rRNA.

In terms of biological role, one of the primary rRNA binding proteins, it binds directly to 16S rRNA where it helps nucleate assembly of the platform of the 30S subunit by binding and bridging several RNA helices of the 16S rRNA. Its function is as follows. Forms an intersubunit bridge (bridge B4) with the 23S rRNA of the 50S subunit in the ribosome. In Synechococcus sp. (strain CC9605), this protein is Small ribosomal subunit protein uS15.